The sequence spans 405 residues: tRNA-specific 2-thiouridylase MnmA (405 aa).

ATP contacts are provided by residues 41–48 (AMSGGVDS) and leucine 67. Cysteine 135 serves as the catalytic Nucleophile. Cysteine 135 and cysteine 231 are oxidised to a cystine. An ATP-binding site is contributed by glycine 159. Residues 181–183 (KDQ) form an interaction with tRNA region. The active-site Cysteine persulfide intermediate is cysteine 231.

It belongs to the MnmA/TRMU family.

It localises to the cytoplasm. It catalyses the reaction S-sulfanyl-L-cysteinyl-[protein] + uridine(34) in tRNA + AH2 + ATP = 2-thiouridine(34) in tRNA + L-cysteinyl-[protein] + A + AMP + diphosphate + H(+). Catalyzes the 2-thiolation of uridine at the wobble position (U34) of tRNA, leading to the formation of s(2)U34. In Maricaulis maris (strain MCS10) (Caulobacter maris), this protein is tRNA-specific 2-thiouridylase MnmA.